The sequence spans 211 residues: Thymidylate kinase (211 aa).

An ATP-binding site is contributed by 11 to 18 (GPDGAGKT).

It belongs to the thymidylate kinase family.

The catalysed reaction is dTMP + ATP = dTDP + ADP. Phosphorylation of dTMP to form dTDP in both de novo and salvage pathways of dTTP synthesis. The chain is Thymidylate kinase from Streptococcus pyogenes serotype M49 (strain NZ131).